The sequence spans 70 residues: Small ribosomal subunit protein bS21 (70 aa).

It belongs to the bacterial ribosomal protein bS21 family.

In Campylobacter fetus subsp. fetus (strain 82-40), this protein is Small ribosomal subunit protein bS21.